We begin with the raw amino-acid sequence, 331 residues long: N-arachidonyl glycine receptor (331 aa).

Residues 1–26 (MAIPSNRDQLALSNGSHPEEYKIAAL) are Extracellular-facing. A glycan (N-linked (GlcNAc...) asparagine) is linked at Asn14. Residues 27-47 (VFYSCIFLIGLLVNVTALWVF) traverse the membrane as a helical segment. At 48-56 (SCTTKKRTT) the chain is on the cytoplasmic side. Residues 57–77 (VTIYMMNVALLDLVFILSLPF) form a helical membrane-spanning segment. The Extracellular segment spans residues 78-95 (RMFYYAKGEWPFGDYFCH). Cysteines 94 and 172 form a disulfide. The chain crosses the membrane as a helical span at residues 96–116 (ILGALVVFYPSLALWLLALIS). Residues 117–138 (ADRYMAIVQPKYAKELKNTGKA) are Cytoplasmic-facing. Residues 139-159 (VLACVGVWIMTLTTTVPLLLL) traverse the membrane as a helical segment. Topologically, residues 160 to 191 (DEDPDKASSPATCLKISDIIHLKAVNVLNFTR) are extracellular. Residue Asn188 is glycosylated (N-linked (GlcNAc...) asparagine). Residues 192–212 (LIFFFLIPLFIMIGCYVVIIH) traverse the membrane as a helical segment. At 213–236 (SLLRGQTSKLKPKVKEKSIRIIVT) the chain is on the cytoplasmic side. Residues 237-257 (LLLQVLACFVPFHICFALLML) traverse the membrane as a helical segment. At 258–268 (QGEENSYSPWG) the chain is on the extracellular side. A helical membrane pass occupies residues 269–289 (AFTTFLMNLSTCLDVVLYYIV). Over 290-331 (SKQFQARVISVMLYRNYLRSVRRKSVRSGSLRSLSNMNSEML) the chain is Cytoplasmic. Residue Ser322 is modified to Phosphoserine.

The protein belongs to the G-protein coupled receptor 1 family. Expressed in testis, spleen and brain (at protein level).

It localises to the cell membrane. Its subcellular location is the cytoplasmic vesicle membrane. In terms of biological role, g protein-coupled receptor (GPCR) that plays a role in diverse physiological processes particularly within the immune and nervous systems. Becomes active when triggered by various endogenous ligands including endocannabinoid N-arachidonyl glycine (NAGly), delta-9-tetrahydrocannabinol or resolvin D2/RvD2 derived from the omega-3 fatty acid docosahexaenoic acid (DHA). Upon RvD2 binding, facilitates the resolution of inflammation, aiding in tissue repair and homeostasis. Mechanistically, RvD2 ligation initiates Galphas protein coupling, activation of cAMP-PKA signaling pathway and phosphorylation of STAT3, leading to RvD2-stimulated macrophage phagocytosis. Mediates NAGly-induced process of reorganization of actin filaments and induction of acrosomal exocytosis. Activation by N-arachidonoyl glycine (NAGly) can also induce apoptosis in macrophages. Plays a role in homeostasis of CD8+ subsets of intraepithelial lymphocytes (IELs) (CD8alphaalpha and CD8alphabeta IELs) in small intestine by supporting preferential migration of CD8alphaalpha T-cells to intraepithelial compartment over lamina propria compartment, and by mediating their reconstitution into small intestine after bone marrow transplant. Participates also in hypotensive responses, mediating reduction in intraocular and blood pressure. The polypeptide is N-arachidonyl glycine receptor (Rattus norvegicus (Rat)).